Consider the following 90-residue polypeptide: Probable Fe(2+)-trafficking protein (90 aa).

It belongs to the Fe(2+)-trafficking protein family. As to quaternary structure, monomer.

In terms of biological role, could be a mediator in iron transactions between iron acquisition and iron-requiring processes, such as synthesis and/or repair of Fe-S clusters in biosynthetic enzymes. The sequence is that of Probable Fe(2+)-trafficking protein from Enterobacter sp. (strain 638).